The chain runs to 2603 residues: Ankyrin repeat domain-containing protein 17 (2603 aa).

Methionine 1 carries the N-acetylmethionine modification. 2 stretches are compositionally biased toward low complexity: residues 1–34 (MEKA…AAAE) and 42–53 (SSRARSASSPRG). The disordered stretch occupies residues 1-143 (MEKATVPVAA…SFILDQDDLE (143 aa)). Phosphoserine is present on residues serine 19 and serine 50. Basic residues predominate over residues 63–79 (KKKPPQQQHHKAKRNRT). Residues 84 to 94 (SSSESSSDSDN) are compositionally biased toward low complexity. The span at 95-111 (SGGGGGGGGGGGGGGGT) shows a compositional bias: gly residues. A compositionally biased stretch (acidic residues) spans 116–131 (SEEEEDDDDEEEEVSE). Phosphoserine is present on serine 156. ANK repeat units follow at residues 233–262 (SDNR…SVNE), 266–295 (EGES…NVED), 300–329 (GDIT…DVNA), 333–362 (TGNT…SIED), 366–395 (NGHT…GINT), 400–429 (FKES…DQEH), 433–462 (EMHT…QVNM), 466–495 (SFES…SLEE), 499–528 (EGYT…NINA), 533–562 (TQET…DIEL), 563–592 (GCST…NVHA), 596–625 (TGDT…DLEH), 629–658 (GGRT…NVNR), 663–692 (NDHT…DPTH), and 696–725 (DGST…NLLS). Lysine 318 participates in a covalent cross-link: Glycyl lysine isopeptide (Lys-Gly) (interchain with G-Cter in SUMO2). Residue serine 803 is modified to Phosphoserine. 10 ANK repeats span residues 1082–1111 (NHDT…SIEH), 1115–1144 (KGFT…DIEA), 1149–1178 (TKDT…NKEH), 1182–1211 (SDYT…EINS), 1217–1246 (LGIS…DINA), 1251–1280 (NRNT…NVEH), 1284–1313 (TGLT…DVNA), 1319–1348 (SRDT…HIDV), 1352–1381 (KGNT…DVDA), and 1385–1414 (RKIT…QFPS). Residues 1442 to 1526 (VQAKDRQAAE…EKEKLKVEDE (85 aa)) adopt a coiled-coil conformation. Serine 1457 carries the post-translational modification Phosphoserine. Disordered stretches follow at residues 1479–1500 (AKRE…RKLE) and 1517–1717 (EKEK…QKRE). A compositionally biased stretch (basic residues) spans 1481–1491 (REKRKEKRRKK). Composition is skewed to low complexity over residues 1531–1550 (TEPP…TWTT), 1602–1611 (ESKSSSTSES), and 1620–1632 (SSCS…SNSS). Phosphoserine is present on residues serine 1635 and serine 1639. 2 stretches are compositionally biased toward polar residues: residues 1642 to 1652 (VVTTTVSSKKQ) and 1675 to 1703 (LSET…SPNG). Serine 1696, serine 1700, and serine 1709 each carry phosphoserine. The KH domain occupies 1725-1789 (RRSKKVSVPS…ESTRQATQLI (65 aa)). Position 1874 is an asymmetric dimethylarginine (arginine 1874). 3 disordered regions span residues 1906–1995 (PRLP…PSVR), 2011–2192 (TTVT…HKNS), and 2273–2332 (VVSS…YGSV). Composition is skewed to low complexity over residues 1950 to 1995 (SNQN…PSVR) and 2011 to 2028 (TTVT…TNAT). Serine 2042, serine 2044, serine 2045, serine 2047, serine 2059, and serine 2067 each carry phosphoserine. Residues 2066 to 2078 (ASPNKVASSSEQE) are compositionally biased toward polar residues. Positions 2095-2106 (SSSSSGSSSAHS) are enriched in low complexity. Composition is skewed to polar residues over residues 2107–2127 (NQQQ…QQSQ) and 2273–2303 (VVSS…SDTS). Pro residues predominate over residues 2308-2318 (FRPPLQRPAPS). Residues serine 2373 and serine 2401 each carry the phosphoserine modification. The disordered stretch occupies residues 2381–2423 (CSSASNDSSAQSVSSGVRAPSPAPSSVPLGSEKPSNVSQDRKV). Low complexity predominate over residues 2382–2411 (SSASNDSSAQSVSSGVRAPSPAPSSVPLGS).

In terms of assembly, interacts (via N-terminus) with NOD2. Interacts with CDK2, MCM3, MCM5, MCM7, CDC6 and PCNA. Interacts with MAVS and IFIH1. Interacts (via the second ankyrin repeat cluster) with DDX58. As to quaternary structure, (Microbial infection) Interacts with enterovirus 71/EV71 capsid protein VP1. Post-translationally, phosphorylated by CDK2. As to expression, ubiquitously expressed.

The protein resides in the cytoplasm. It is found in the nucleus. Functionally, could play pivotal roles in cell cycle and DNA regulation. Involved in innate immune defense against viruse by positively regulating the viral dsRNA receptors DDX58 and IFIH1 signaling pathways. Involves in NOD2- and NOD1-mediated responses to bacteria suggesting a role in innate antibacterial immune pathways too. Target of enterovirus 71 which is the major etiological agent of HFMD (hand, foot and mouth disease). Could play a central role for the formation and/or maintenance of the blood vessels of the circulation system. This is Ankyrin repeat domain-containing protein 17 (ANKRD17) from Homo sapiens (Human).